The following is a 511-amino-acid chain: D-alanine--D-alanyl carrier protein ligase (511 aa).

An ATP-binding site is contributed by 152–153 (TS). Asp-199 is a D-alanine binding site. 294–299 (NAYGPT) serves as a coordination point for ATP. Val-303 lines the D-alanine pocket. ATP contacts are provided by residues Asp-385, 397-400 (YGGR), and Lys-499. Lys-499 is a D-alanine binding site.

Belongs to the ATP-dependent AMP-binding enzyme family. DltA subfamily.

It is found in the cytoplasm. The catalysed reaction is holo-[D-alanyl-carrier protein] + D-alanine + ATP = D-alanyl-[D-alanyl-carrier protein] + AMP + diphosphate. The protein operates within cell wall biogenesis; lipoteichoic acid biosynthesis. Functionally, catalyzes the first step in the D-alanylation of lipoteichoic acid (LTA), the activation of D-alanine and its transfer onto the D-alanyl carrier protein (Dcp) DltC. In an ATP-dependent two-step reaction, forms a high energy D-alanyl-AMP intermediate, followed by transfer of the D-alanyl residue as a thiol ester to the phosphopantheinyl prosthetic group of the Dcp. D-alanylation of LTA plays an important role in modulating the properties of the cell wall in Gram-positive bacteria, influencing the net charge of the cell wall. The sequence is that of D-alanine--D-alanyl carrier protein ligase from Streptococcus agalactiae serotype V (strain ATCC BAA-611 / 2603 V/R).